The following is a 72-amino-acid chain: Nod factor export ATP-binding protein I (72 aa).

The protein belongs to the ABC transporter superfamily. Lipooligosaccharide exporter (TC 3.A.1.102) family. As to quaternary structure, the complex is composed of two ATP-binding proteins (NodI) and two transmembrane proteins (NodJ).

It localises to the cell inner membrane. Functionally, part of the ABC transporter complex NodIJ involved in the export of the nodulation factors (Nod factors), the bacterial signal molecules that induce symbiosis and subsequent nodulation induction. Nod factors are LCO (lipo-chitin oligosaccharide), a modified beta-1,4-linked N-acetylglucosamine oligosaccharide. This subunit is responsible for energy coupling to the transport system. The protein is Nod factor export ATP-binding protein I of Rhizobium leguminosarum bv. trifolii.